The sequence spans 401 residues: Putative F-box/FBD/LRR-repeat protein At3g23955 (401 aa).

Positions 56-102 constitute an F-box domain; that stretch reads VPARFQLPDPLLTQILNHLPTEEAVKTSVLSTRWRTLWLWVHNLELS. LRR repeat units lie at residues 128–152 and 275–296; these read IESLKLSLDGNDASYLKPWIDAFVK and MSSLYITLNASDLKWFPIFLRS. An FBD domain is found at 321–373; that stretch reads IKRVSISSVPECLLSSLEFVEFKAPICGLAPEMMLVWYFLENSPTLKKLTLRL.

In Arabidopsis thaliana (Mouse-ear cress), this protein is Putative F-box/FBD/LRR-repeat protein At3g23955.